Reading from the N-terminus, the 588-residue chain is MKNNLPIKSRLLYKRLLSYVKPFWPVLLLGVLANILYSGIDAGFTYMTKLFLDKSFITIDLDFVKQIPLIVLIGITLRGLVSSLGSYCMTWVARSVVKVLRQTVFSHIIHLPADYYDEATSGQLLSKILYDVEQVAQVSADALTDFIQNICLVIGLLTVMMVICWQLSLMFLLTIPFVGIIVNYTNKRVRRISHKVQKTMGEVTEIASEAIEGYRVVRIFGGERYEITKFNKATEYSRKNDMKVAISKAINVSGVQLVIAIGIAMIIMAAIHLSTVITISAGSFLAIIAAMLQLIKPMKTLTTLNATIQRGLAGAESVFNLLDLPLERNNGLILKEKVRGEIEFKHVYHAYRQSQNILHDVNFVIEAGTSVALVGHSGSGKTTIASLLPRFYELSQGMITLDGMPIQQLSLESLRKQISLVSQNVTLFNDTLANNIAYGRFDASREQIITAAKLAYADEFIKQLPDGYDTRVGENGVLLSGGQRQRIAIARAILKDAPILILDEATSALDSESEHYIQAALEQVMKGRTTLIIAHRLSTIKHAHKIIVLQHGRIVEQGSHQELLDMDGHYAQLYKVQQFGRINEEVVV.

6 consecutive transmembrane segments (helical) span residues 23-43 (FWPV…IDAG), 56-76 (FITI…IGIT), 141-161 (DALT…TVMM), 162-182 (VICW…GIIV), 257-277 (LVIA…STVI), and 278-298 (TISA…IKPM). Residues 28 to 310 (LLGVLANILY…LTTLNATIQR (283 aa)) enclose the ABC transmembrane type-1 domain. In terms of domain architecture, ABC transporter spans 342-576 (IEFKHVYHAY…DGHYAQLYKV (235 aa)). 375 to 382 (GHSGSGKT) is a binding site for ATP.

Belongs to the ABC transporter superfamily. Lipid exporter (TC 3.A.1.106) family. Homodimer.

The protein resides in the cell inner membrane. The enzyme catalyses ATP + H2O + lipid A-core oligosaccharideSide 1 = ADP + phosphate + lipid A-core oligosaccharideSide 2.. Its function is as follows. Involved in lipopolysaccharide (LPS) biosynthesis. Translocates lipid A-core from the inner to the outer leaflet of the inner membrane. Transmembrane domains (TMD) form a pore in the inner membrane and the ATP-binding domain (NBD) is responsible for energy generation. This chain is ATP-dependent lipid A-core flippase, found in Legionella pneumophila (strain Paris).